The following is a 513-amino-acid chain: Probable metalloreductase AIM14 (513 aa).

The next 7 membrane-spanning stretches (helical) occupy residues 22-42, 66-86, 103-123, 138-158, 166-186, 193-213, and 219-239; these read GYII…AHFL, PFWV…FTNV, LAFC…LLGQ, LIIL…TIHH, WANL…IVSS, FYSY…LLMI, and GVSD…ASRV. One can recognise a Ferric oxidoreductase domain in the interval 100-211; sequence LGRLAFCLVP…NFTVALFVLL (112 aa). One can recognise an FAD-binding FR-type domain in the interval 240-368; the sequence is YNGYSVPGLT…GIPLYEYFDN (129 aa).

It belongs to the ferric reductase (FRE) family. AIM14 subfamily.

The protein localises to the membrane. Functionally, probable cell surface metalloreductase. May be involved in iron or copper homeostasis. The chain is Probable metalloreductase AIM14 (AIM14) from Clavispora lusitaniae (strain ATCC 42720) (Yeast).